Consider the following 217-residue polypeptide: MGQKINPLGFRLGTTQSHHSVWFAQPKNYSGGLQEDKKIKDCIKNYVQKNRKISSGVEGIARIKIKKRIDLIQVIIYMGFPKFLEGNPQGIEELQSNIQKEFNSVNQKLNIAITRIAKPYGQPNILAEFIAGQLKNRVSFRKAMKKAIELTEQADTKGIQIQIAGRIDGKEIARVEWIREGRVPLQTIRAKIDYCSYTVRTIYGALGIKIWIFAGEE.

Residues 43-117 (IKNYVQKNRK…KLNIAITRIA (75 aa)) enclose the KH type-2 domain.

This sequence belongs to the universal ribosomal protein uS3 family. Part of the 30S ribosomal subunit.

It localises to the plastid. The protein resides in the chloroplast. The polypeptide is Small ribosomal subunit protein uS3c (rps3) (Ranunculus macranthus (Large buttercup)).